The following is a 670-amino-acid chain: Septation protein 7 (670 aa).

One can recognise a Septin-type G domain in the interval 33–357 (KGIKFTFMVV…ETYRTERLTK (325 aa)). Residues 43–50 (GESGTGKT) are G1 motif. GTP is bound by residues 43-50 (GESGTGKT), glycine 137, 217-225 (KADSFTLNE), and arginine 306. The tract at residues 134–137 (DTPG) is G3 motif. The tract at residues 216 to 219 (GKAD) is G4 motif. 2 disordered regions span residues 383–513 (LNDS…QRNQ) and 574–670 (LNRQ…VSNH). Residues 395–404 (NNNNNNNNNN) show a composition bias toward low complexity. Polar residues predominate over residues 405-421 (ASTIPSMSNLAQLTTST). Low complexity-rich tracts occupy residues 433–446 (SITS…KSTS) and 463–473 (SSFTSSTSTVS). The stretch at 472–606 (VSLEGGEKEG…SVQSGGVDDG (135 aa)) forms a coiled coil. Basic and acidic residues predominate over residues 476–487 (GGEKEGGHHDRG). Over residues 489 to 500 (NSTSTNNNNNNN) the composition is skewed to low complexity. Residues 631–645 (QSHEYDNSEYHHDDS) are compositionally biased toward basic and acidic residues.

The protein belongs to the TRAFAC class TrmE-Era-EngA-EngB-Septin-like GTPase superfamily. Septin GTPase family. Component of the septin complex which consists of CDC3, CDC10, CDC11, CDC12 and probably SEP7. The purified septin complex appeared to have a stoichiometry of 2 CDC3, 1 to 2 CDC10, 1 CDC11, 2 CDC12, and 1 or none SEP7 subunit. Induction of hyphal growth brings about important modifications in septin ring dynamics, because the rings were found in a different state from those of yeast cells. This hyphal-specific state contains a core of stable septins (SEP7, CDC3, and CDC12), and it shows a high CDC10 turnover between the ring and the cytoplasm. Interacts with GIN4. Post-translationally, phosphorylated by GIN4 which stabilizes the GIN4-SEP7 interaction.

It localises to the bud neck. Functionally, septins are GTPases involved in cytokinesis that assemble early in the cell cycle as a patch at the incipient bud site and form a ring before bud emergence, which transforms into an hour-glass shaped collar of cortical filaments that spans both sides of the mother-bud neck. This collar persists until just before cytokinesis, when it splits into two rings that occupy opposite sides of the neck. The septins at the bud neck serve as a structural scaffold that recruits different components involved in diverse processes at specific stages during the cell cycle. Many proteins bind asymmetrically to the septin collar. The septin assembly is regulated by protein kinase GIN4. Septins are also involved in cell morphogenesis, chlamydospores morphogenesis, bud site selection, chitin deposition, cell cycle regulation, cell compartmentalization and spore wall formation. SEP7 is required to convert hyphal septin rings into the hyphal-specific state and is necessary for CDC10 turnover during hyphal growth. This is Septation protein 7 (SEP7) from Candida albicans (strain SC5314 / ATCC MYA-2876) (Yeast).